A 317-amino-acid polypeptide reads, in one-letter code: Cytochrome f (317 aa).

A signal peptide spans 1 to 34 (MKGLKNQIMKKTSLFICTLLFISSIVFHPKITFA). Heme contacts are provided by Tyr-35, Cys-55, Cys-58, and His-59. A helical transmembrane segment spans residues 284–304 (VIGLIAFFIGVGLTQILLVLK).

The protein belongs to the cytochrome f family. In terms of assembly, the 4 large subunits of the cytochrome b6-f complex are cytochrome b6, subunit IV (17 kDa polypeptide, PetD), cytochrome f and the Rieske protein, while the 4 small subunits are PetG, PetL, PetM and PetN. The complex functions as a dimer. The cofactor is heme.

It is found in the cellular thylakoid membrane. Its function is as follows. Component of the cytochrome b6-f complex, which mediates electron transfer between photosystem II (PSII) and photosystem I (PSI), cyclic electron flow around PSI, and state transitions. The protein is Cytochrome f of Prochlorococcus marinus (strain MIT 9301).